The primary structure comprises 165 residues: PTS system glucose-specific EIIA component (165 aa).

The region spanning 33–137 (DPVFAGRMMG…STITPIVITN (105 aa)) is the PTS EIIA type-1 domain. Residues histidine 70 and histidine 85 each contribute to the Zn(2+) site. Histidine 85 serves as the catalytic Tele-phosphohistidine intermediate; for EIIA activity. Histidine 85 is modified (phosphohistidine; by HPr).

As to quaternary structure, heterodimer with glycerol kinase (glpk). The cofactor is Zn(2+).

It localises to the cytoplasm. The phosphoenolpyruvate-dependent sugar phosphotransferase system (sugar PTS), a major carbohydrate active transport system, catalyzes the phosphorylation of incoming sugar substrates concomitantly with their translocation across the cell membrane. The enzyme II complex composed of PtsG and Crr is involved in glucose transport. In Bacillus anthracis, this protein is PTS system glucose-specific EIIA component (crr).